The following is a 203-amino-acid chain: Elongation factor Ts (203 aa).

The tract at residues 80-83 (TDFV) is involved in Mg(2+) ion dislocation from EF-Tu.

Belongs to the EF-Ts family.

The protein resides in the cytoplasm. Functionally, associates with the EF-Tu.GDP complex and induces the exchange of GDP to GTP. It remains bound to the aminoacyl-tRNA.EF-Tu.GTP complex up to the GTP hydrolysis stage on the ribosome. This Moorella thermoacetica (strain ATCC 39073 / JCM 9320) protein is Elongation factor Ts.